We begin with the raw amino-acid sequence, 167 residues long: NADH-quinone oxidoreductase subunit I 1 (167 aa).

2 consecutive 4Fe-4S ferredoxin-type domains span residues 58–88 and 98–127; these read LRRY…IDAE and TRYD…EGPN. Cys68, Cys71, Cys74, Cys78, Cys107, Cys110, Cys113, and Cys117 together coordinate [4Fe-4S] cluster.

This sequence belongs to the complex I 23 kDa subunit family. NDH-1 is composed of 14 different subunits. Subunits NuoA, H, J, K, L, M, N constitute the membrane sector of the complex. It depends on [4Fe-4S] cluster as a cofactor.

It localises to the cell inner membrane. It catalyses the reaction a quinone + NADH + 5 H(+)(in) = a quinol + NAD(+) + 4 H(+)(out). Functionally, NDH-1 shuttles electrons from NADH, via FMN and iron-sulfur (Fe-S) centers, to quinones in the respiratory chain. The immediate electron acceptor for the enzyme in this species is believed to be ubiquinone. Couples the redox reaction to proton translocation (for every two electrons transferred, four hydrogen ions are translocated across the cytoplasmic membrane), and thus conserves the redox energy in a proton gradient. The sequence is that of NADH-quinone oxidoreductase subunit I 1 from Cereibacter sphaeroides (strain ATCC 17029 / ATH 2.4.9) (Rhodobacter sphaeroides).